Consider the following 338-residue polypeptide: Tryptophan--tRNA ligase (338 aa).

ATP contacts are provided by residues 18–20 (QPS) and 26–27 (GN). The 'HIGH' region motif lies at 19 to 27 (PSGNLTIGN). D142 lines the L-tryptophan pocket. ATP is bound by residues 154–156 (GND), I193, and 202–206 (KMSKS). The 'KMSKS' region motif lies at 202 to 206 (KMSKS).

The protein belongs to the class-I aminoacyl-tRNA synthetase family. As to quaternary structure, homodimer.

It is found in the cytoplasm. The catalysed reaction is tRNA(Trp) + L-tryptophan + ATP = L-tryptophyl-tRNA(Trp) + AMP + diphosphate + H(+). Its function is as follows. Catalyzes the attachment of tryptophan to tRNA(Trp). This chain is Tryptophan--tRNA ligase, found in Clostridium tetani (strain Massachusetts / E88).